A 57-amino-acid polypeptide reads, in one-letter code: Mambalgin-3 (57 aa).

Disulfide bonds link Cys3/Cys19, Cys12/Cys37, Cys41/Cys49, and Cys50/Cys55.

This sequence belongs to the three-finger toxin family. Short-chain subfamily. Mambalgin sub-subfamily. As to expression, expressed by the venom gland.

The protein resides in the secreted. Functionally, this three-finger toxin inhibits ASIC channels. It acts as a gating modifier toxin by decreasing the apparent proton sensitivity of activation and by slightly increasing the apparent proton sensitivity for inactivation. It binds more tightly to the closed state and to a much lesser extent the inactivated/desensitized state of ASIC1a. It interacts directly with the outside surface of the thumb domain of chicken ASIC1a (ASIC1a), but does not insert into the acidic pocket as suggested previously. This binding leads to relocation of the thumb domain that could disrupt the acidic pocket of cASIC1a. The peptide exerts both stimulatory and inhibitory effects on ASIC1a. It reversibly inhibits rASIC1a (IC(50)=17 nM), rASIC1b (IC(50)= 44 nM) and rASIC1a-rASIC2a (IC(50)=252 nM) channels. In vivo, it shows a potent naloxone-resistant analgesic effect against acute and inflammatory pain upon central and peripheral injection. In addition, it also has an opioid-independent effect on both thermal and mechanical inflammatory pain after systemic administration and is effective against neuropathic pain. The polypeptide is Mambalgin-3 (Dendroaspis angusticeps (Eastern green mamba)).